The primary structure comprises 262 residues: Flap endonuclease Xni (262 aa).

Aspartate 105 serves as a coordination point for Mg(2+). The 98-residue stretch at 162–259 (ERSQFLDLMA…VIDSQPEKTI (98 aa)) folds into the 5'-3' exonuclease domain. Residues leucine 172, alanine 173, proline 181, isoleucine 183, and isoleucine 186 each contribute to the K(+) site. The interaction with DNA stretch occupies residues 185 to 190 (GIGPKS).

Belongs to the Xni family. The cofactor is Mg(2+). K(+) serves as cofactor.

Functionally, has flap endonuclease activity. During DNA replication, flap endonucleases cleave the 5'-overhanging flap structure that is generated by displacement synthesis when DNA polymerase encounters the 5'-end of a downstream Okazaki fragment. This chain is Flap endonuclease Xni, found in Shewanella baltica (strain OS185).